We begin with the raw amino-acid sequence, 167 residues long: Putative N-acetylgalactosamine-6-phosphate deacetylase (167 aa).

Belongs to the metallo-dependent hydrolases superfamily. NagA family.

It catalyses the reaction N-acetyl-D-galactosamine 6-phosphate + H2O = D-galactosamine 6-phosphate + acetate. This chain is Putative N-acetylgalactosamine-6-phosphate deacetylase (agaA), found in Escherichia coli (strain K12).